The sequence spans 630 residues: 1-deoxy-D-xylulose-5-phosphate synthase (630 aa).

Residues His72 and 113–115 (GHS) each bind thiamine diphosphate. Asp144 contacts Mg(2+). Thiamine diphosphate contacts are provided by residues 145-146 (GA), Asn173, Tyr284, and Glu367. Asn173 contributes to the Mg(2+) binding site.

The protein belongs to the transketolase family. DXPS subfamily. As to quaternary structure, homodimer. Mg(2+) is required as a cofactor. Thiamine diphosphate serves as cofactor.

The catalysed reaction is D-glyceraldehyde 3-phosphate + pyruvate + H(+) = 1-deoxy-D-xylulose 5-phosphate + CO2. It participates in metabolic intermediate biosynthesis; 1-deoxy-D-xylulose 5-phosphate biosynthesis; 1-deoxy-D-xylulose 5-phosphate from D-glyceraldehyde 3-phosphate and pyruvate: step 1/1. Its function is as follows. Catalyzes the acyloin condensation reaction between C atoms 2 and 3 of pyruvate and glyceraldehyde 3-phosphate to yield 1-deoxy-D-xylulose-5-phosphate (DXP). This Geobacillus sp. (strain WCH70) protein is 1-deoxy-D-xylulose-5-phosphate synthase.